The chain runs to 583 residues: Steryl-sulfatase (583 aa).

Positions 1-21 are cleaved as a signal peptide; that stretch reads MPLRKMKIPFLLLFFLWEAES. Residues 22–184 are Lumenal-facing; sequence HAASRPNIIL…GSVFTTGFKR (163 aa). Ca(2+) contacts are provided by Asp35 and Asp36. Asn47 is a glycosylation site (N-linked (GlcNAc...) asparagine). Cys75 provides a ligand contact to Ca(2+). Residue Cys75 is the Nucleophile of the active site. The residue at position 75 (Cys75) is a 3-oxoalanine (Cys). Residue His136 is part of the active site. 2 disulfide bridges follow: Cys141–Cys148 and Cys170–Cys242. The chain crosses the membrane as a helical span at residues 185–208; that stretch reads LVFLPLQIVGVTLLTLAALNCLGL. Over 209–212 the chain is Cytoplasmic; sequence LHVP. The chain crosses the membrane as a helical span at residues 213–234; sequence LGVFFSLLFLAALILTLFLGFL. Residues 235–583 are Lumenal-facing; that stretch reads HYFRPLNCFM…REKQDKRLSR (349 aa). A glycan (N-linked (GlcNAc...) asparagine) is linked at Asn259. Asp342 and Gln343 together coordinate Ca(2+). Disulfide bonds link Cys446/Cys489, Cys481/Cys487, Cys562/Cys570, and Cys563/Cys572.

The protein belongs to the sulfatase family. As to quaternary structure, homodimer. It depends on Ca(2+) as a cofactor. In terms of processing, the conversion to 3-oxoalanine (also known as C-formylglycine, FGly), of a serine or cysteine residue in prokaryotes and of a cysteine residue in eukaryotes, is critical for catalytic activity.

The protein localises to the cytoplasmic vesicle. It localises to the secretory vesicle. Its subcellular location is the microneme membrane. The protein resides in the endoplasmic reticulum membrane. It catalyses the reaction dehydroepiandrosterone 3-sulfate + H2O = 3beta-hydroxyandrost-5-en-17-one + sulfate + H(+). The enzyme catalyses estrone 3-sulfate + H2O = estrone + sulfate + H(+). Its function is as follows. Catalyzes the conversion of sulfated steroid precursors, such as dehydroepiandrosterone sulfate (DHEA-S) and estrone sulfate to the free steroid. This is Steryl-sulfatase (STS) from Homo sapiens (Human).